The chain runs to 369 residues: S-(hydroxymethyl)glutathione dehydrogenase (369 aa).

Residues Cys40, His62, Cys92, Cys95, Cys98, Cys106, and Cys169 each coordinate Zn(2+).

Belongs to the zinc-containing alcohol dehydrogenase family. Class-III subfamily. As to quaternary structure, homodimer. It depends on Zn(2+) as a cofactor.

It localises to the cytoplasm. The enzyme catalyses S-(hydroxymethyl)glutathione + NADP(+) = S-formylglutathione + NADPH + H(+). It catalyses the reaction S-(hydroxymethyl)glutathione + NAD(+) = S-formylglutathione + NADH + H(+). It carries out the reaction a primary alcohol + NAD(+) = an aldehyde + NADH + H(+). The catalysed reaction is a secondary alcohol + NAD(+) = a ketone + NADH + H(+). The enzyme catalyses S-nitrosoglutathione + NADH + H(+) = S-(hydroxysulfenamide)glutathione + NAD(+). In terms of biological role, has high formaldehyde dehydrogenase activity in the presence of glutathione and catalyzes the oxidation of normal alcohols in a reaction that is not GSH-dependent. In addition, hemithiolacetals other than those formed from GSH, including omega-thiol fatty acids, also are substrates. Also acts as a S-nitroso-glutathione reductase by catalyzing the NADH-dependent reduction of S-nitrosoglutathione. This chain is S-(hydroxymethyl)glutathione dehydrogenase (frmA), found in Escherichia coli O6:H1 (strain CFT073 / ATCC 700928 / UPEC).